The following is a 216-amino-acid chain: MKSIHWPLAGVAALLLSMQAQAADGQKIYTQGGANPAAMACATCHGADAMGMAAAGFPRLAGIDAGYSRKQLDDFRSGARSNPIMQPIAAALSDEEMDAVAATLEAMPAPDFAAIGRSEAAEGVGARLALRGAWERNIPECVACHGPAGMGVGASFPPLAGQSAQYLGAQLNAWRQGTRKNDPNDLMGHIARAMSDDEVQAVAEYFANVGQKETGQ.

The first 22 residues, 1 to 22, serve as a signal peptide directing secretion; it reads MKSIHWPLAGVAALLLSMQAQA. Cytochrome c domains follow at residues 23 to 108 and 118 to 210; these read ADGQ…EAMP and SEAA…ANVG. Heme c-binding residues include Cys-41, Cys-44, His-45, Cys-141, Cys-144, and His-145.

Post-translationally, binds 2 heme c groups covalently per subunit.

Functionally, acts as an electron acceptor for the thiosulfate dehydrogenase TsdA. The sequence is that of Thiosulfate dehydrogenase electron acceptor (tsdB) from Stutzerimonas stutzeri (strain A1501) (Pseudomonas stutzeri).